The primary structure comprises 179 residues: Enhancer of split m8 protein (179 aa).

The bHLH domain occupies 10–65 (YQKVKKPMLERQRRARMNKCLDNLKTLVAELRGDDGILRMDKAEMLESAVIFMRQQ). Positions 83-116 (FKNGYMNAVNEVSRVMASTPGMSVDLGKSVMTHL) constitute an Orange domain. Residues 146–179 (DKAPLSPASSGYHSDCDSPAPSPQPMQQPLWRPW) form a disordered region. A WRPW motif motif is present at residues 176 to 179 (WRPW).

As to quaternary structure, homodimer. Heterodimers with dpn. Transcription repression requires formation of a complex with a corepressor protein (Groucho).

Its subcellular location is the nucleus. In terms of biological role, participates in the control of cell fate choice by uncommitted neuroectodermal cells in the embryo. Transcriptional repressor. Binds DNA on N-box motifs: 5'-CACNAG-3'. Part of the Notch signaling pathway. The sequence is that of Enhancer of split m8 protein from Drosophila melanogaster (Fruit fly).